An 80-amino-acid chain; its full sequence is Exodeoxyribonuclease 7 small subunit (80 aa).

It belongs to the XseB family. As to quaternary structure, heterooligomer composed of large and small subunits.

It localises to the cytoplasm. It catalyses the reaction Exonucleolytic cleavage in either 5'- to 3'- or 3'- to 5'-direction to yield nucleoside 5'-phosphates.. Its function is as follows. Bidirectionally degrades single-stranded DNA into large acid-insoluble oligonucleotides, which are then degraded further into small acid-soluble oligonucleotides. This chain is Exodeoxyribonuclease 7 small subunit, found in Pseudomonas fluorescens (strain ATCC BAA-477 / NRRL B-23932 / Pf-5).